The following is a 416-amino-acid chain: Actin-like protein 9 (416 aa).

Residues 1-23 (MDPNQGNPLEPQDSPEIPKPSLN) form a disordered region.

The protein belongs to the actin family. Interacts with ACTL7A.

It is found in the cytoplasmic vesicle. It localises to the secretory vesicle. Its subcellular location is the acrosome. The protein resides in the cytoplasm. The protein localises to the cytoskeleton. It is found in the perinuclear theca. Functionally, testis-specic protein that plays an important role in fusion of proacrosomal vesicles and perinuclear theca formation. The chain is Actin-like protein 9 (ACTL9) from Bos taurus (Bovine).